A 251-amino-acid chain; its full sequence is Triosephosphate isomerase (251 aa).

2 residues coordinate substrate: Asn10 and Lys12. His95 acts as the Electrophile in catalysis. Glu167 (proton acceptor) is an active-site residue.

Belongs to the triosephosphate isomerase family. In terms of assembly, homodimer.

The enzyme catalyses D-glyceraldehyde 3-phosphate = dihydroxyacetone phosphate. It functions in the pathway carbohydrate biosynthesis; gluconeogenesis. Its pathway is carbohydrate degradation; glycolysis; D-glyceraldehyde 3-phosphate from glycerone phosphate: step 1/1. In Coprinopsis cinerea (strain Okayama-7 / 130 / ATCC MYA-4618 / FGSC 9003) (Inky cap fungus), this protein is Triosephosphate isomerase (TPI).